The following is a 180-amino-acid chain: Large ribosomal subunit protein uL5 (180 aa).

The protein belongs to the universal ribosomal protein uL5 family. In terms of assembly, part of the 50S ribosomal subunit; part of the 5S rRNA/L5/L18/L25 subcomplex. Contacts the 5S rRNA and the P site tRNA. Forms a bridge to the 30S subunit in the 70S ribosome.

In terms of biological role, this is one of the proteins that bind and probably mediate the attachment of the 5S RNA into the large ribosomal subunit, where it forms part of the central protuberance. In the 70S ribosome it contacts protein S13 of the 30S subunit (bridge B1b), connecting the 2 subunits; this bridge is implicated in subunit movement. Contacts the P site tRNA; the 5S rRNA and some of its associated proteins might help stabilize positioning of ribosome-bound tRNAs. The chain is Large ribosomal subunit protein uL5 from Clostridium botulinum (strain Loch Maree / Type A3).